Consider the following 186-residue polypeptide: Large ribosomal subunit protein uL5 (186 aa).

This sequence belongs to the universal ribosomal protein uL5 family. Part of the 50S ribosomal subunit; part of the 5S rRNA/L5/L18/L25 subcomplex. Contacts the 5S rRNA and the P site tRNA. Forms a bridge to the 30S subunit in the 70S ribosome.

This is one of the proteins that bind and probably mediate the attachment of the 5S RNA into the large ribosomal subunit, where it forms part of the central protuberance. In the 70S ribosome it contacts protein S13 of the 30S subunit (bridge B1b), connecting the 2 subunits; this bridge is implicated in subunit movement. Contacts the P site tRNA; the 5S rRNA and some of its associated proteins might help stabilize positioning of ribosome-bound tRNAs. The chain is Large ribosomal subunit protein uL5 from Porphyromonas gingivalis (strain ATCC 33277 / DSM 20709 / CIP 103683 / JCM 12257 / NCTC 11834 / 2561).